We begin with the raw amino-acid sequence, 297 residues long: Syntaxin-4 (297 aa).

A compositionally biased stretch (basic and acidic residues) spans Met1–Asp12. Residues Met1–Glu21 are disordered. Over Met1–Leu275 the chain is Cytoplasmic. 2 positions are modified to phosphoserine: Ser14 and Ser15. Position 31 is a phosphothreonine (Thr31). Phosphoserine occurs at positions 36, 117, 208, and 248. A coiled-coil region spans residues His43–Thr163. The interval Glu154–Gly297 is interaction with CENPF. In terms of domain architecture, t-SNARE coiled-coil homology spans Leu200–Ala262. The chain crosses the membrane as a helical; Anchor for type IV membrane protein span at residues Ile276–Val296. Position 297 (Gly297) is a topological domain, extracellular.

It belongs to the syntaxin family. In terms of assembly, component of the SNARE complex composed of STX4, SNAP23 and VAMP7 that interacts with SYT7 during lysosomal exocytosis. Found in a complex with VAMP8 and SNAP23. Detected in a complex with SNAP23 and STXBP4. Interacts with VAMP2. Interacts with SNAP23 and SNAPIN. Interacts with LLGL1. Interacts (via C-terminus) with CENPF. Interacts with DOC2B. Interacts with STXBP6. Interacts with STXBP3; excludes interaction with DOC2B and SNAP25. Interacts with STXBP4; excludes interaction with VAMP2. Interacts with STXBP5L. In terms of tissue distribution, expressed in neutrophils and neutrophil-differentiated HL-60 cells. Expression in neutrophils increases with differentiation.

It is found in the cell membrane. Its subcellular location is the cell projection. The protein localises to the neuron projection. It localises to the stereocilium. Functionally, plasma membrane t-SNARE that mediates docking of transport vesicles. Necessary for the translocation of SLC2A4 from intracellular vesicles to the plasma membrane. In neurons, recruited at neurite tips to membrane domains rich in the phospholipid 1-oleoyl-2-palmitoyl-PC (OPPC) which promotes neurite tip surface expression of the dopamine transporter SLC6A3/DAT by facilitating fusion of SLC6A3-containing transport vesicles with the plasma membrane. Together with STXB3 and VAMP2, may also play a role in docking/fusion of intracellular GLUT4-containing vesicles with the cell surface in adipocytes and in docking of synaptic vesicles at presynaptic active zones. Required for normal hearing. The sequence is that of Syntaxin-4 (STX4) from Homo sapiens (Human).